The following is a 534-amino-acid chain: Cytochrome c oxidase subunit 1 (534 aa).

Over Met-1–Ile-14 the chain is Mitochondrial matrix. A helical membrane pass occupies residues Ala-15–Glu-39. Ca(2+) contacts are provided by Glu-39, Ala-42, and Gly-44. Over Leu-40–Leu-54 the chain is Mitochondrial intermembrane. The chain crosses the membrane as a helical span at residues Phe-55–Ile-88. Position 62 (His-62) interacts with Fe(II)-heme a. At Gly-89–Arg-97 the chain is on the mitochondrial matrix side. Residues Ile-98–Leu-118 form a helical membrane-spanning segment. At Val-119–Pro-142 the chain is on the mitochondrial intermembrane side. Residues Ser-143 to Asn-171 form a helical membrane-spanning segment. Topologically, residues Met-172 to Pro-183 are mitochondrial matrix. Residues Leu-184–Asn-215 traverse the membrane as a helical segment. Residues Phe-216–Asp-228 lie on the Mitochondrial intermembrane side of the membrane. The helical transmembrane segment at Pro-229–Ser-263 threads the bilayer. His-241 serves as a coordination point for Cu cation. A cross-link (1'-histidyl-3'-tyrosine (His-Tyr)) is located at residues His-241–Tyr-245. O2 is bound at residue Tyr-245. At Lys-264–Gly-269 the chain is on the mitochondrial matrix side. Residues Glu-270–Val-295 traverse the membrane as a helical segment. Positions 290 and 291 each coordinate Cu cation. At Gly-296 to Asp-298 the chain is on the mitochondrial intermembrane side. Residues Ala-299–Ile-327 form a helical membrane-spanning segment. Over His-328–Ala-335 the chain is Mitochondrial matrix. The helical transmembrane segment at Thr-336–Leu-358 threads the bilayer. Residues Ala-359–Thr-370 lie on the Mitochondrial intermembrane side of the membrane. His-368 and Asp-369 together coordinate Mg(2+). A helical membrane pass occupies residues Tyr-371 to Ile-400. His-376 serves as a coordination point for heme a3. His-378 contributes to the Fe(II)-heme a binding site. Residues Leu-401 to Asn-406 lie on the Mitochondrial matrix side of the membrane. Residues Glu-407–Leu-431 form a helical membrane-spanning segment. Topologically, residues Gly-432–Gly-449 are mitochondrial intermembrane. Pro-441 provides a ligand contact to Ca(2+). A helical transmembrane segment spans residues Trp-450–Asp-474. Topologically, residues Gln-475–Ser-534 are mitochondrial matrix.

It belongs to the heme-copper respiratory oxidase family. In terms of assembly, component of the cytochrome c oxidase (complex IV, CIV), a multisubunit enzyme composed of 12 subunits. The complex is composed of a catalytic core of 3 subunits COX1, COX2 and COX3, encoded in the mitochondrial DNA, and 9 supernumerary subunits COX4, COX5A (or COX5B), COX6, COX7, COX8, COX9, COX12, COX13 and COX26, which are encoded in the nuclear genome. The complex exists as a monomer or a dimer and forms supercomplexes (SCs) in the inner mitochondrial membrane with a dimer of ubiquinol-cytochrome c oxidoreductase (cytochrome b-c1 complex, complex III, CIII), resulting in 2 different assemblies (supercomplexes III(2)IV and III(2)IV(2)). It depends on heme as a cofactor. The cofactor is Cu cation. In terms of processing, the N-terminus is blocked.

Its subcellular location is the mitochondrion inner membrane. It catalyses the reaction 4 Fe(II)-[cytochrome c] + O2 + 8 H(+)(in) = 4 Fe(III)-[cytochrome c] + 2 H2O + 4 H(+)(out). It participates in energy metabolism; oxidative phosphorylation. In terms of biological role, component of the cytochrome c oxidase, the last enzyme in the mitochondrial electron transport chain which drives oxidative phosphorylation. The respiratory chain contains 3 multisubunit complexes succinate dehydrogenase (complex II, CII), ubiquinol-cytochrome c oxidoreductase (cytochrome b-c1 complex, complex III, CIII) and cytochrome c oxidase (complex IV, CIV), that cooperate to transfer electrons derived from NADH and succinate to molecular oxygen, creating an electrochemical gradient over the inner membrane that drives transmembrane transport and the ATP synthase. Cytochrome c oxidase is the component of the respiratory chain that catalyzes the reduction of oxygen to water. Electrons originating from reduced cytochrome c in the intermembrane space (IMS) are transferred via the dinuclear copper A center (CU(A)) of COX2 and heme A of COX1 to the active site in COX1, a binuclear center (BNC) formed by heme A3 and copper B (CU(B)). The BNC reduces molecular oxygen to 2 water molecules using 4 electrons from cytochrome c in the IMS and 4 protons from the mitochondrial matrix. COX1 is a catalytic core subunit containing heme A and the active site BNC with heme A3 and the copper atom CU(B). This is Cytochrome c oxidase subunit 1 (COX1) from Saccharomyces cerevisiae (strain ATCC 204508 / S288c) (Baker's yeast).